Consider the following 143-residue polypeptide: Histone H2B (143 aa).

The interval 1 to 52 is disordered; the sequence is MAPKPASTAGKAPASTASKAPVKSDAAKTASKSKVSSGADGEKKKRKKTRKE. At lysine 11 the chain carries N6-acetyllysine; alternate. A Glycyl lysine isopeptide (Lys-Gly) (interchain with G-Cter in SUMO); alternate cross-link involves residue lysine 11. Phosphoserine is present on serine 15. Lysine 19 carries the N6-acetyllysine modification. Low complexity predominate over residues 23-39; sequence KSDAAKTASKSKVSSGA. Lysine 137 participates in a covalent cross-link: Glycyl lysine isopeptide (Lys-Gly) (interchain with G-Cter in ubiquitin).

It belongs to the histone H2B family. The nucleosome is a histone octamer containing two molecules each of H2A, H2B, H3 and H4 assembled in one H3-H4 heterotetramer and two H2A-H2B heterodimers. The octamer wraps approximately 147 bp of DNA. Post-translationally, monoubiquitinated to form H2BK123ub1. H2BK123ub1 gives a specific tag for epigenetic transcriptional activation and is also prerequisite for H3K4me and H3K79me formation. H2BK123ub1 also modulates the formation of double-strand breaks during meiosis and is a prerequisite for DNA-damage checkpoint activation. In terms of processing, phosphorylated to form H2BS10ph during progression through meiotic prophase. May be correlated with chromosome condensation. Acetylation of N-terminal lysines and particularly formation of H2BK11ac has a positive effect on transcription. Post-translationally, sumoylation to form H2BK6su occurs preferentially near the telomeres and represses gene transcription.

The protein resides in the nucleus. Its subcellular location is the chromosome. In terms of biological role, core component of nucleosome. Nucleosomes wrap and compact DNA into chromatin, limiting DNA accessibility to the cellular machineries which require DNA as a template. Histones thereby play a central role in transcription regulation, DNA repair, DNA replication and chromosomal stability. DNA accessibility is regulated via a complex set of post-translational modifications of histones, also called histone code, and nucleosome remodeling. The protein is Histone H2B (htbA) of Agaricus bisporus (White button mushroom).